The following is a 331-amino-acid chain: NAD-dependent protein deacetylase HST2 (331 aa).

Residues 1 to 262 (MPSLDDILKP…EKLCTLLGLD (262 aa)) enclose the Deacetylase sirtuin-type domain. NAD(+) is bound by residues 26 to 46 (GAGI…TGLY) and 109 to 112 (QNID). The active-site Proton acceptor is the histidine 129. The Zn(2+) site is built by cysteine 137, cysteine 140, cysteine 161, and cysteine 164. NAD(+)-binding positions include 201 to 203 (GTS), 226 to 228 (NKE), and cysteine 248. Residues 276 to 331 (YSKAETKETKMHEIEDKLKEEAHLKEDKHTTKVDKKEKQNDANDKELEQLIDKLKI) adopt a coiled-coil conformation. The segment at 283 to 319 (ETKMHEIEDKLKEEAHLKEDKHTTKVDKKEKQNDAND) is disordered.

This sequence belongs to the sirtuin family. Class I subfamily. It depends on Zn(2+) as a cofactor.

It is found in the cytoplasm. The protein localises to the nucleus. The enzyme catalyses N(6)-acetyl-L-lysyl-[protein] + NAD(+) + H2O = 2''-O-acetyl-ADP-D-ribose + nicotinamide + L-lysyl-[protein]. In terms of biological role, NAD-dependent histone deacetylase that is involved in nuclear silencing events. Derepresses subtelomeric silencing and increases repression in nucleolar (rDNA) silencing. Its function is negatively regulated by active nuclear export. The protein is NAD-dependent protein deacetylase HST2 (HST2) of Candida albicans (strain SC5314 / ATCC MYA-2876) (Yeast).